Consider the following 150-residue polypeptide: Large ribosomal subunit protein bL9 (150 aa).

The protein belongs to the bacterial ribosomal protein bL9 family.

In terms of biological role, binds to the 23S rRNA. The chain is Large ribosomal subunit protein bL9 from Herminiimonas arsenicoxydans.